The sequence spans 193 residues: Acyl carrier protein phosphodiesterase (193 aa).

This sequence belongs to the AcpH family.

It catalyses the reaction holo-[ACP] + H2O = apo-[ACP] + (R)-4'-phosphopantetheine + H(+). In terms of biological role, converts holo-ACP to apo-ACP by hydrolytic cleavage of the phosphopantetheine prosthetic group from ACP. This is Acyl carrier protein phosphodiesterase from Salmonella newport (strain SL254).